The primary structure comprises 1016 residues: Probably inactive leucine-rich repeat receptor-like protein kinase At3g28040 (1016 aa).

The signal sequence occupies residues 1–26 (MGKQRRTMISFTLFLTLTMMSSLING). At 27–646 (DTDSIQLNDD…FHRRMFLSVS (620 aa)) the chain is on the extracellular side. LRR repeat units lie at residues 102–124 (RLKVLSLSNNNFTGNINALSNNN), 125–147 (HLQKLDLSHNNLSGQIPSSLGSI), 149–171 (SLQHLDLTGNSFSGTLSDDLFNN), 174–196 (SLRYLSLSHNHLEGQIPSTLFRC), 198–219 (VLNSLNLSRNRFSGNPSFVSGI), 224–245 (RLRALDLSSNSLSGSIPLGILS), 248–270 (NLKELQLQRNQFSGALPSDIGLC), 272–295 (HLNRVDLSSNHFSGELPRTLQKLK), 296–318 (SLNHFDVSNNLLSGDFPPWIGDM), 320–342 (GLVHLDFSSNELTGKLPSSISNL), 344–366 (SLKDLNLSENKLSGEVPESLESC), 368–390 (ELMIVQLKGNDFSGNIPDGFFDL), 391–413 (GLQEMDFSGNGLTGSIPRGSSRL), 416–438 (SLIRLDLSHNSLTGSIPGEVGLF), 440–462 (HMRYLNLSWNHFNTRVPPEIEFL), 464–486 (NLTVLDLRNSALIGSVPADICES), 488–510 (SLQILQLDGNSLTGSIPEGIGNC), 512–535 (SLKLLSLSHNNLTGPIPKSLSNLQ), 536–559 (ELKILKLEANKLSGEIPKELGDLQ), and 560–582 (NLLLVNVSFNRLIGRLPLGDVFQ). N-linked (GlcNAc...) asparagine glycosylation is found at N112, N135, and N171. N-linked (GlcNAc...) asparagine glycosylation occurs at N203. Residue N349 is glycosylated (N-linked (GlcNAc...) asparagine). N-linked (GlcNAc...) asparagine glycans are attached at residues N445, N464, N509, and N522. The N-linked (GlcNAc...) asparagine glycan is linked to N565. A helical transmembrane segment spans residues 647–667 (VIVAISAAILIFSGVIIITLL). The Cytoplasmic portion of the chain corresponds to 668 to 1016 (NASVRRRLAF…PVPHRIMDSF (349 aa)). A Protein kinase domain is found at 726–1013 (LNKASRIGEG…INSPVPHRIM (288 aa)). ATP-binding positions include 732–740 (IGEGVFGTV) and K755. Residues Y841 and Y898 each carry the phosphotyrosine modification.

The protein belongs to the protein kinase superfamily. Ser/Thr protein kinase family.

It is found in the membrane. The polypeptide is Probably inactive leucine-rich repeat receptor-like protein kinase At3g28040 (Arabidopsis thaliana (Mouse-ear cress)).